A 547-amino-acid polypeptide reads, in one-letter code: Probable terpene synthase 3 (547 aa).

Residues D298, D302, and E451 each coordinate Mg(2+). A DDXXD motif motif is present at residues D298–D302.

This sequence belongs to the terpene synthase family. The cofactor is Mg(2+).

In terms of biological role, probable sesquiterpene synthase. This is Probable terpene synthase 3 (TPS3) from Ricinus communis (Castor bean).